Reading from the N-terminus, the 406-residue chain is 3-oxoacyl-[acyl-carrier-protein] synthase 1 (406 aa).

In terms of domain architecture, Ketosynthase family 3 (KS3) spans Met1–Lys405. Residues Cys164, His299, and His335 each act as for beta-ketoacyl synthase activity in the active site.

It belongs to the thiolase-like superfamily. Beta-ketoacyl-ACP synthases family. Homodimer.

The protein resides in the cytoplasm. The catalysed reaction is a fatty acyl-[ACP] + malonyl-[ACP] + H(+) = a 3-oxoacyl-[ACP] + holo-[ACP] + CO2. The enzyme catalyses (3Z)-decenoyl-[ACP] + malonyl-[ACP] + H(+) = 3-oxo-(5Z)-dodecenoyl-[ACP] + holo-[ACP] + CO2. The protein operates within lipid metabolism; fatty acid biosynthesis. In terms of biological role, involved in the type II fatty acid elongation cycle. Catalyzes the elongation of a wide range of acyl-ACP by the addition of two carbons from malonyl-ACP to an acyl acceptor. Can also use unsaturated fatty acids. Catalyzes a key reaction in unsaturated fatty acid (UFA) synthesis, the elongation of the cis-3-decenoyl-ACP produced by FabA. The polypeptide is 3-oxoacyl-[acyl-carrier-protein] synthase 1 (fabB) (Buchnera aphidicola subsp. Acyrthosiphon pisum (strain APS) (Acyrthosiphon pisum symbiotic bacterium)).